Consider the following 656-residue polypeptide: uncharacterized protein (656 aa).

2 disordered regions span residues 1–41 (MMAT…ESEG) and 60–88 (SNKV…HNLE). Residues 22–36 (SDSSDSGSDVSFFSV) show a composition bias toward low complexity. At Ser-39 the chain carries Phosphoserine. Positions 62–78 (KVEKDSDSEQRGRKKET) are enriched in basic and acidic residues.

The protein localises to the cytoplasm. It localises to the mitochondrion. This is an uncharacterized protein from Saccharomyces cerevisiae (strain ATCC 204508 / S288c) (Baker's yeast).